The following is a 513-amino-acid chain: Cytochrome P450 monooxygenase sthF (513 aa).

2 helical membrane-spanning segments follow: residues 13 to 33 (FPSL…YIFI) and 212 to 232 (MLHP…IILL). Cys-452 provides a ligand contact to heme.

It belongs to the cytochrome P450 family. Heme serves as cofactor.

The protein localises to the membrane. It carries out the reaction dehydroprobetaenone I + NADPH + O2 + H(+) = epoxybetaenone + NADP(+) + H2O. The enzyme catalyses dehydroprobetaenone I + 3 NADPH + 3 O2 + 3 H(+) = betaenone C + 3 NADP(+) + 3 H2O. It catalyses the reaction probetaenone I + 3 NADPH + 3 O2 + 3 H(+) = betaenone B + 3 NADP(+) + 3 H2O. The protein operates within mycotoxin biosynthesis. In terms of biological role, cytochrome P450 monooxygenase; part of the gene cluster that mediates the biosynthesis of the phytotoxin stemphyloxin II. The first step of the pathway is the synthesis of dehydroprobetaenone I by the polyketide synthase sthA and the enoyl reductase sthE via condensation of one acetyl-CoA starter unit with 7 malonyl-CoA units and 5 methylations. The C-terminal reductase (R) domain of sthA catalyzes the reductive release of the polyketide chain. Because sthA lacks a designated enoylreductase (ER) domain, the required activity is provided the enoyl reductase sthE. The short-chain dehydrogenase/reductase sthC then catalyzes reduction of dehydroprobetaenone I to probetaenone I. The cytochrome P450 monooxygenase sthF catalyzes successive epoxidation, oxidation (resulting from epoxide opening) and hydroxylation to install a tertiary alcohol in the decaline ring to yield betaenone C from dehydroprobetaenone I and betaenone B from probetaenone I. The FAD-linked oxidoreductase sthB is responsible for the conversion of betaenone C to betaenone A via an intramolecular aldol reaction between C-1 and C-17 to form the bridged tricyclic system in betaenone A. Finally, the cytochrome P450 monooxygenase sthD catalyzes the hydroxylation of C-15 to afford the final metabolite stemphyloxin II. In Phaeosphaeria nodorum (strain SN15 / ATCC MYA-4574 / FGSC 10173) (Glume blotch fungus), this protein is Cytochrome P450 monooxygenase sthF.